We begin with the raw amino-acid sequence, 84 residues long: Sulfur carrier protein TusA (84 aa).

Cys19 functions as the Cysteine persulfide intermediate in the catalytic mechanism.

It belongs to the sulfur carrier protein TusA family. As to quaternary structure, interacts with IscS.

The protein localises to the cytoplasm. Its pathway is tRNA modification. In terms of biological role, sulfur carrier protein involved in sulfur trafficking in the cell. Part of a sulfur-relay system required for 2-thiolation during synthesis of 2-thiouridine of the modified wobble base 5-methylaminomethyl-2-thiouridine (mnm(5)s(2)U) in tRNA. Interacts with IscS and stimulates its cysteine desulfurase activity. Accepts an activated sulfur from IscS, which is then transferred to TusD, and thus determines the direction of sulfur flow from IscS to 2-thiouridine formation. Also appears to be involved in sulfur transfer for the biosynthesis of molybdopterin. The protein is Sulfur carrier protein TusA of Proteus mirabilis (strain HI4320).